The following is a 56-amino-acid chain: Large ribosomal subunit protein uL30 (56 aa).

Belongs to the universal ribosomal protein uL30 family. Part of the 50S ribosomal subunit.

This chain is Large ribosomal subunit protein uL30, found in Nitratidesulfovibrio vulgaris (strain ATCC 29579 / DSM 644 / CCUG 34227 / NCIMB 8303 / VKM B-1760 / Hildenborough) (Desulfovibrio vulgaris).